A 393-amino-acid polypeptide reads, in one-letter code: Chalcone synthase LF2 (393 aa).

Residue Cys-164 is part of the active site.

The protein belongs to the thiolase-like superfamily. Chalcone/stilbene synthases family.

It catalyses the reaction (E)-4-coumaroyl-CoA + 3 malonyl-CoA + 3 H(+) = 2',4,4',6'-tetrahydroxychalcone + 3 CO2 + 4 CoA. It functions in the pathway secondary metabolite biosynthesis; flavonoid biosynthesis. In terms of biological role, the primary product of this enzyme is 4,2',4',6'-tetrahydroxychalcone (also termed naringenin-chalcone or chalcone) which can under specific conditions spontaneously isomerize into naringenin. The polypeptide is Chalcone synthase LF2 (CHS-LF2) (Ipomoea batatas (Sweet potato)).